The primary structure comprises 536 residues: Chaperonin GroEL 1 (536 aa).

ATP contacts are provided by residues 29-32, 86-90, Gly413, 476-478, and Asp492; these read TLGP, DGTTT, and NAA.

It belongs to the chaperonin (HSP60) family. In terms of assembly, forms a cylinder of 14 subunits composed of two heptameric rings stacked back-to-back. Interacts with the co-chaperonin GroES.

It localises to the cytoplasm. It catalyses the reaction ATP + H2O + a folded polypeptide = ADP + phosphate + an unfolded polypeptide.. Its function is as follows. Together with its co-chaperonin GroES, plays an essential role in assisting protein folding. The GroEL-GroES system forms a nano-cage that allows encapsulation of the non-native substrate proteins and provides a physical environment optimized to promote and accelerate protein folding. The sequence is that of Chaperonin GroEL 1 from Nocardia farcinica (strain IFM 10152).